Consider the following 367-residue polypeptide: Peptide chain release factor 2 (367 aa).

The residue at position 254 (Gln254) is an N5-methylglutamine.

This sequence belongs to the prokaryotic/mitochondrial release factor family. Post-translationally, methylated by PrmC. Methylation increases the termination efficiency of RF2.

Its subcellular location is the cytoplasm. Peptide chain release factor 2 directs the termination of translation in response to the peptide chain termination codons UGA and UAA. In Leptospira borgpetersenii serovar Hardjo-bovis (strain JB197), this protein is Peptide chain release factor 2.